An 869-amino-acid polypeptide reads, in one-letter code: Phosphatidylethanolamine N-methyltransferase (869 aa).

Serine 2 is subject to N-acetylserine. Residues 2–55 (SSCKTTLSEMVGSVTKDRGTINVEARTRSSNVTFKPPVTHDMVRSLFDPTLKKS) are Lumenal-facing. A helical transmembrane segment spans residues 56 to 76 (LLEKCIALAIISNFFICYWVF). Residues 77–86 (QRFGLQFTKY) are Cytoplasmic-facing. Residues 87–107 (FFLVQYLFWRIAYNLGIGLVL) traverse the membrane as a helical segment. Residues 108 to 187 (HYQSHYETLT…EINVWLIFRQ (80 aa)) lie on the Lumenal side of the membrane. The chain crosses the membrane as a helical span at residues 188-208 (FVDLILMQDFVTYIIYVYLSI). The Cytoplasmic segment spans residues 209–212 (PYSW). The chain crosses the membrane as a helical span at residues 213–233 (VQIFNWRSLLGVILILFNIWV). Residues 234 to 258 (KLDAHRVVKDYAWYWGDFFFLEESE) lie on the Lumenal side of the membrane. A helical transmembrane segment spans residues 259–279 (LIFDGVFNISPHPMYSIGYLG). Residues 280–291 (YYGLSLICNDYK) lie on the Cytoplasmic side of the membrane. Residues 292-310 (VLLVSVFGHYSQFLFLKYV) form a helical membrane-spanning segment. The Lumenal portion of the chain corresponds to 311-362 (ENPHIERTYGDGTDSDSQMNSRIDDLISKENYDYSRPLINMGLSFNNFNKLR). A helical transmembrane segment spans residues 363-383 (FTDYFTIGTVAALMLGTIMNA). Topologically, residues 384–389 (RFINLN) are cytoplasmic. Residues 390-410 (YLFITVFVTKLVSWLFISTIL) traverse the membrane as a helical segment. Topologically, residues 411-439 (YKQSQSKWFTRLFLENGYTQVYSYEQWQF) are lumenal. The chain crosses the membrane as a helical span at residues 440-460 (IYNYYLVLTYTLMIIHTGLQI). At 461–463 (WSN) the chain is on the cytoplasmic side. A helical transmembrane segment spans residues 464–484 (FSNINNSQLIFGLILVALQTW). Residues 485-534 (CDKETRLAISDFGWFYGDFFLSNYISTRKLTSQGIYRYLNHPEAVLGVVG) are Lumenal-facing. The chain crosses the membrane as a helical span at residues 535-555 (VWGTVLMTNFAVTNIILAVLW). Topologically, residues 556-869 (TLTNFILVKF…DIKQTLDSLA (314 aa)) are cytoplasmic.

Belongs to the class VI-like SAM-binding methyltransferase superfamily. CHO2 family.

Its subcellular location is the endoplasmic reticulum membrane. It carries out the reaction a 1,2-diacyl-sn-glycero-3-phosphoethanolamine + S-adenosyl-L-methionine = a 1,2-diacyl-sn-glycero-3-phospho-N-methylethanolamine + S-adenosyl-L-homocysteine + H(+). It functions in the pathway phospholipid metabolism; phosphatidylcholine biosynthesis. In terms of biological role, catalyzes the first step of the methylation pathway of phosphatidylcholine biosynthesis, the SAM-dependent methylation of phosphatidylethanolamine (PE) to phosphatidylmonomethylethanolamine (PMME). Preferentially converts di-C16:1 substrates. This Saccharomyces cerevisiae (strain ATCC 204508 / S288c) (Baker's yeast) protein is Phosphatidylethanolamine N-methyltransferase.